The sequence spans 167 residues: Urease accessory protein UreE (167 aa).

Residues 137–167 form a disordered region; the sequence is ARGAYHAHGGHSHGHDHGHSHGHDHHDHSHD. A compositionally biased stretch (basic and acidic residues) spans 149 to 167; it reads HGHDHGHSHGHDHHDHSHD.

This sequence belongs to the UreE family.

The protein resides in the cytoplasm. Its function is as follows. Involved in urease metallocenter assembly. Binds nickel. Probably functions as a nickel donor during metallocenter assembly. The chain is Urease accessory protein UreE from Rhizobium rhizogenes (strain K84 / ATCC BAA-868) (Agrobacterium radiobacter).